Consider the following 226-residue polypeptide: Choline transport system permease protein OpuBD (226 aa).

Residues 22–202 enclose the ABC transmembrane type-1 domain; it reads FGRHFLMSAY…VMAVGADLLM (181 aa). Helical transmembrane passes span 27–47, 52–72, 73–93, 148–168, and 182–202; these read LMSA…GILI, RLSA…ALAM, LAVL…SLFL, ALVI…GGLG, and AIIL…DLLM.

It belongs to the binding-protein-dependent transport system permease family. CysTW subfamily.

It is found in the cell membrane. Its function is as follows. Involved in a high affinity multicomponent binding-protein-dependent transport system for choline; probably responsible for the translocation of the substrate across the membrane. The chain is Choline transport system permease protein OpuBD (opuBD) from Bacillus subtilis (strain 168).